Consider the following 540-residue polypeptide: Gamma-cadinene synthase (540 aa).

Mg(2+) is bound by residues Asp-292, Asp-296, Asp-436, Ser-440, and Glu-444. The DDXXD motif motif lies at 292–296 (DDTYD).

Belongs to the terpene synthase family. Requires Mg(2+) as cofactor. Mn(2+) is required as a cofactor.

The catalysed reaction is (2E,6E)-farnesyl diphosphate = (+)-gamma-cadinene + diphosphate. It participates in secondary metabolite biosynthesis; terpenoid biosynthesis. Functionally, sesquiterpene synthase that catalyzes the cyclization of trans,trans-farnesyl diphosphate (FPP) to gamma cadinene. This chain is Gamma-cadinene synthase (CDS), found in Ocimum basilicum (Sweet basil).